The primary structure comprises 309 residues: Homoserine kinase (309 aa).

91 to 101 serves as a coordination point for ATP; that stretch reads PVGSGLGSSAC.

It belongs to the GHMP kinase family. Homoserine kinase subfamily.

It localises to the cytoplasm. It catalyses the reaction L-homoserine + ATP = O-phospho-L-homoserine + ADP + H(+). It participates in amino-acid biosynthesis; L-threonine biosynthesis; L-threonine from L-aspartate: step 4/5. Its function is as follows. Catalyzes the ATP-dependent phosphorylation of L-homoserine to L-homoserine phosphate. The protein is Homoserine kinase of Hamiltonella defensa subsp. Acyrthosiphon pisum (strain 5AT).